Reading from the N-terminus, the 371-residue chain is MLKFTLHKKDGLARRGTLELNHGKIETPVFMPVGTYGSVKAMNPQNLHDIKAQIILGNTYHLWLRPGLEVVEQFGGLHGFIGWDKPILTDSGGFQVFSLSDMRKLTEEGCTFKSPINGDKLFLSPEISMKIQTVLNSDIAMQLDECTPGETTREQARKSLQMSLRWAERSKKAFEDLKNPNALFGIVQGAMYEDLREESLRGLEEFDFPGLAVGGLSVGEPKPEMYRMLHAVGPILPEHKPHYLMGVGTPEDLVYGVAHGIDMFDCVMPTRNARNGWLFTRFGDLKIKNAKHKLDKRPIDESCTCYACQNFSRAYLHHLHRAGEILGAQLNTIHNLHFYQVIMAEMREAVEQGKFADWQAQFHENRARGVD.

Residue D90 is the Proton acceptor of the active site. Substrate is bound by residues 90-94 (DSGGF), D144, Q188, and G215. Positions 246-252 (GVGTPED) are RNA binding. The active-site Nucleophile is D265. Positions 270 to 274 (TRNAR) are RNA binding; important for wobble base 34 recognition. Zn(2+) is bound by residues C303, C305, C308, and H334.

The protein belongs to the queuine tRNA-ribosyltransferase family. As to quaternary structure, homodimer. Within each dimer, one monomer is responsible for RNA recognition and catalysis, while the other monomer binds to the replacement base PreQ1. It depends on Zn(2+) as a cofactor.

It catalyses the reaction 7-aminomethyl-7-carbaguanine + guanosine(34) in tRNA = 7-aminomethyl-7-carbaguanosine(34) in tRNA + guanine. Its pathway is tRNA modification; tRNA-queuosine biosynthesis. Catalyzes the base-exchange of a guanine (G) residue with the queuine precursor 7-aminomethyl-7-deazaguanine (PreQ1) at position 34 (anticodon wobble position) in tRNAs with GU(N) anticodons (tRNA-Asp, -Asn, -His and -Tyr). Catalysis occurs through a double-displacement mechanism. The nucleophile active site attacks the C1' of nucleotide 34 to detach the guanine base from the RNA, forming a covalent enzyme-RNA intermediate. The proton acceptor active site deprotonates the incoming PreQ1, allowing a nucleophilic attack on the C1' of the ribose to form the product. After dissociation, two additional enzymatic reactions on the tRNA convert PreQ1 to queuine (Q), resulting in the hypermodified nucleoside queuosine (7-(((4,5-cis-dihydroxy-2-cyclopenten-1-yl)amino)methyl)-7-deazaguanosine). The protein is Queuine tRNA-ribosyltransferase of Neisseria gonorrhoeae (strain NCCP11945).